Reading from the N-terminus, the 289-residue chain is ATP synthase gamma chain (289 aa).

It belongs to the ATPase gamma chain family. In terms of assembly, F-type ATPases have 2 components, CF(1) - the catalytic core - and CF(0) - the membrane proton channel. CF(1) has five subunits: alpha(3), beta(3), gamma(1), delta(1), epsilon(1). CF(0) has three main subunits: a, b and c.

It is found in the cell membrane. Produces ATP from ADP in the presence of a proton gradient across the membrane. The gamma chain is believed to be important in regulating ATPase activity and the flow of protons through the CF(0) complex. This Hamiltonella defensa subsp. Acyrthosiphon pisum (strain 5AT) protein is ATP synthase gamma chain.